A 118-amino-acid chain; its full sequence is Small ribosomal subunit protein uS10 (118 aa).

Ser37 carries the phosphoserine modification.

Belongs to the universal ribosomal protein uS10 family. In terms of assembly, component of the small ribosomal subunit (SSU). Mature yeast ribosomes consist of a small (40S) and a large (60S) subunit. The 40S small subunit contains 1 molecule of ribosomal RNA (18S rRNA) and at least 33 different proteins. The large 60S subunit contains 3 rRNA molecules (25S, 5.8S and 5S rRNA) and at least 46 different proteins.

Its subcellular location is the cytoplasm. Its function is as follows. Component of the ribosome, a large ribonucleoprotein complex responsible for the synthesis of proteins in the cell. The small ribosomal subunit (SSU) binds messenger RNAs (mRNAs) and translates the encoded message by selecting cognate aminoacyl-transfer RNA (tRNA) molecules. The large subunit (LSU) contains the ribosomal catalytic site termed the peptidyl transferase center (PTC), which catalyzes the formation of peptide bonds, thereby polymerizing the amino acids delivered by tRNAs into a polypeptide chain. The nascent polypeptides leave the ribosome through a tunnel in the LSU and interact with protein factors that function in enzymatic processing, targeting, and the membrane insertion of nascent chains at the exit of the ribosomal tunnel. This is Small ribosomal subunit protein uS10 (rps20) from Schizosaccharomyces pombe (strain 972 / ATCC 24843) (Fission yeast).